The sequence spans 349 residues: Protein RecA (349 aa).

Position 69–76 (69–76 (GPESSGKT)) interacts with ATP.

It belongs to the RecA family.

The protein localises to the cytoplasm. Can catalyze the hydrolysis of ATP in the presence of single-stranded DNA, the ATP-dependent uptake of single-stranded DNA by duplex DNA, and the ATP-dependent hybridization of homologous single-stranded DNAs. It interacts with LexA causing its activation and leading to its autocatalytic cleavage. In Crocosphaera subtropica (strain ATCC 51142 / BH68) (Cyanothece sp. (strain ATCC 51142)), this protein is Protein RecA.